Reading from the N-terminus, the 150-residue chain is D-aminoacyl-tRNA deacylase (150 aa).

Positions 138–139 (GP) match the Gly-cisPro motif, important for rejection of L-amino acids motif.

Belongs to the DTD family. Homodimer.

The protein resides in the cytoplasm. The enzyme catalyses glycyl-tRNA(Ala) + H2O = tRNA(Ala) + glycine + H(+). The catalysed reaction is a D-aminoacyl-tRNA + H2O = a tRNA + a D-alpha-amino acid + H(+). An aminoacyl-tRNA editing enzyme that deacylates mischarged D-aminoacyl-tRNAs. Also deacylates mischarged glycyl-tRNA(Ala), protecting cells against glycine mischarging by AlaRS. Acts via tRNA-based rather than protein-based catalysis; rejects L-amino acids rather than detecting D-amino acids in the active site. By recycling D-aminoacyl-tRNA to D-amino acids and free tRNA molecules, this enzyme counteracts the toxicity associated with the formation of D-aminoacyl-tRNA entities in vivo and helps enforce protein L-homochirality. The polypeptide is D-aminoacyl-tRNA deacylase (Salinibacter ruber (strain DSM 13855 / M31)).